The primary structure comprises 458 residues: Monomethylamine methyltransferase MtmB1 (458 aa).

Residue Pyl-202 is a non-standard amino acid, pyrrolysine.

Belongs to the monomethylamine methyltransferase family.

It carries out the reaction Co(I)-[methylamine-specific corrinoid protein] + methylamine + H(+) = methyl-Co(III)-[methylamine-specific corrinoid protein] + NH4(+). Its pathway is one-carbon metabolism; methanogenesis from methylamine. Catalyzes the transfer of the methyl group from monomethylamine to the corrinoid cofactor of MtmC. This is Monomethylamine methyltransferase MtmB1 (mtmB1) from Methanosarcina barkeri (strain Fusaro / DSM 804).